Consider the following 289-residue polypeptide: Elongation factor Ts (289 aa).

Residues 80–83 (TDFV) form an involved in Mg(2+) ion dislocation from EF-Tu region.

Belongs to the EF-Ts family.

It is found in the cytoplasm. Functionally, associates with the EF-Tu.GDP complex and induces the exchange of GDP to GTP. It remains bound to the aminoacyl-tRNA.EF-Tu.GTP complex up to the GTP hydrolysis stage on the ribosome. This chain is Elongation factor Ts, found in Francisella tularensis subsp. tularensis (strain FSC 198).